Consider the following 285-residue polypeptide: MARCO-like protein (285 aa).

Residues 1 to 20 form the signal peptide; it reads MRAFIFFLFMLLAMFSASST. An N-linked (GlcNAc...) asparagine glycan is attached at Asn24. Disordered stretches follow at residues 47–77 and 91–285; these read NHLGGQRDSNKQGGSYTQGNPGTFRLQGQPG and GRAG…QGNL. Composition is skewed to polar residues over residues 57-67 and 105-114; these read KQGGSYTQGNP and SGKSNQKGNP. The span at 115-128 shows a compositional bias: low complexity; sequence ESSNKQENSGSSSQ. The span at 134–145 shows a compositional bias: polar residues; the sequence is ISTQQGNPGSSD. A compositionally biased stretch (low complexity) spans 160–173; it reads GSSSQQGKPGSSSQ. Residues 174–185 show a composition bias toward polar residues; sequence HGNLGSSTQKGN. Residues 186–220 show a composition bias toward low complexity; that stretch reads LGSSSLQGHLGLSSHQGKPESSGQQGKPGSSSQQG. Positions 221 to 285 are enriched in polar residues; that stretch reads NLGTSGQQEK…PGSSSRQGNL (65 aa).

This chain is MARCO-like protein, found in Homo sapiens (Human).